A 565-amino-acid chain; its full sequence is Urocanate hydratase (565 aa).

NAD(+)-binding positions include Gly-61 to Gly-62, Gln-139, Gly-185 to Gly-187, Glu-205, Arg-210, Asn-251 to Ala-252, Gln-272 to His-276, Tyr-282 to Leu-283, and Tyr-331. Cys-419 is a catalytic residue. Residues Leu-453–Ser-472 form a disordered region. The span at Arg-463 to Ser-472 shows a compositional bias: basic and acidic residues. Gly-501 lines the NAD(+) pocket.

This sequence belongs to the urocanase family. It depends on NAD(+) as a cofactor.

Its subcellular location is the cytoplasm. It carries out the reaction 4-imidazolone-5-propanoate = trans-urocanate + H2O. The protein operates within amino-acid degradation; L-histidine degradation into L-glutamate; N-formimidoyl-L-glutamate from L-histidine: step 2/3. Its function is as follows. Catalyzes the conversion of urocanate to 4-imidazolone-5-propionate. The polypeptide is Urocanate hydratase (Pseudomonas savastanoi pv. phaseolicola (strain 1448A / Race 6) (Pseudomonas syringae pv. phaseolicola (strain 1448A / Race 6))).